The chain runs to 38 residues: MKKTDKILKEIGIQRVAIMEGKKYSKGFMEDGDIGVQY.

Heterohexamer of 3 large and 3 small chains. The cofactor is pyruvate.

The catalysed reaction is L-histidine + H(+) = histamine + CO2. The polypeptide is Histidine decarboxylase small chain (Micrococcus sp).